The primary structure comprises 354 residues: Sulfate/thiosulfate import ATP-binding protein CysA (354 aa).

In terms of domain architecture, ABC transporter spans 3 to 237 (IEVRGLSKRF…PATPFVYGFL (235 aa)). Residue 35-42 (GPSGCGKT) participates in ATP binding.

This sequence belongs to the ABC transporter superfamily. Sulfate/tungstate importer (TC 3.A.1.6) family. In terms of assembly, the complex is composed of two ATP-binding proteins (CysA), two transmembrane proteins (CysT and CysW) and a solute-binding protein (CysP).

It localises to the cell inner membrane. The catalysed reaction is sulfate(out) + ATP + H2O = sulfate(in) + ADP + phosphate + H(+). The enzyme catalyses thiosulfate(out) + ATP + H2O = thiosulfate(in) + ADP + phosphate + H(+). Part of the ABC transporter complex CysAWTP involved in sulfate/thiosulfate import. Responsible for energy coupling to the transport system. The sequence is that of Sulfate/thiosulfate import ATP-binding protein CysA from Bordetella bronchiseptica (strain ATCC BAA-588 / NCTC 13252 / RB50) (Alcaligenes bronchisepticus).